Here is a 710-residue protein sequence, read N- to C-terminus: Forkhead box protein P2 (710 aa).

Positions 1–28 (MMQESATETISNSSMNQNGMSTLSSQLD) are enriched in polar residues. Disordered regions lie at residues 1–44 (MMQE…SSEV) and 272–334 (HSQE…TGAS). Residues 273–283 (SQEDNGIKHGG) show a composition bias toward basic and acidic residues. The segment covering 287 to 300 (TTNNSSSTTSSTTS) has biased composition (low complexity). A compositionally biased stretch (polar residues) spans 310 to 319 (SIVNGQSSVL). Positions 321 to 332 (ARRDSSSHEETG) are enriched in basic and acidic residues. The segment at 343–366 (CKWPGCESICEDFGQFLKHLNNEH) adopts a C2H2-type zinc-finger fold. The tract at residues 383–404 (VQQLEIQLSKERERLQAMMTHL) is leucine-zipper. The CTBP1-binding stretch occupies residues 417-421 (PLNLV). Residues 433-454 (TSPQSLPQTPTTPTAPVTPITQ) show a composition bias toward low complexity. The tract at residues 433–460 (TSPQSLPQTPTTPTAPVTPITQGPSVIT) is disordered. The segment at residues 499–589 (RPPFTYATLI…SQKITGSPTL (91 aa)) is a DNA-binding region (fork-head). Disordered regions lie at residues 644–663 (LDHIDSNGNSSPGCSPQPHI) and 673–710 (VIAEDEDCPMSLVTTANHSPELEDDREIEEEPLSEDLE). A compositionally biased stretch (acidic residues) spans 694-710 (LEDDREIEEEPLSEDLE).

As to quaternary structure, forms homodimers and heterodimers with FOXP1 and FOXP4. Dimerization is required for DNA-binding. Interacts with CTBP1. Interacts with FOXP1. Interacts with TBR1. Interacts with ZMYM2.

The protein localises to the nucleus. Transcriptional repressor that may play a role in the specification and differentiation of lung epithelium. May also play a role in developing neural, gastrointestinal and cardiovascular tissues. Can act with CTBP1 to synergistically repress transcription but CTPBP1 is not essential. Plays a role in synapse formation by regulating SRPX2 levels. The polypeptide is Forkhead box protein P2 (Foxp2) (Rattus norvegicus (Rat)).